A 695-amino-acid polypeptide reads, in one-letter code: uncharacterized protein (695 aa).

A Phosphoserine modification is found at S113. 12 consecutive transmembrane segments (helical) span residues 237–257, 265–285, 313–333, 344–364, 380–400, 408–428, 457–477, 488–508, 531–551, 565–585, 604–624, and 633–653; these read FPLI…SLTV, LAAV…FEGI, IAFS…SEPL, INLT…YIFF, GIYV…TLVW, FIGA…LLLF, AFSG…LTLF, AQSA…AIGI, QVGL…LVFG, VIKL…FDSL, IVNL…LSWF, and WIGI…YVLF. Acidic residues predominate over residues 673-688; the sequence is EVDSDEYLTDSDDPDE. Residues 673–695 form a disordered region; it reads EVDSDEYLTDSDDPDENTALLGA.

It belongs to the multi antimicrobial extrusion (MATE) (TC 2.A.66.1) family.

The protein resides in the membrane. This is an uncharacterized protein from Saccharomyces cerevisiae (strain ATCC 204508 / S288c) (Baker's yeast).